The following is a 113-amino-acid chain: Guanylate cyclase activator 2B (113 aa).

The first 27 residues, 1–27, serve as a signal peptide directing secretion; the sequence is MASRAAAGLLLCGVALVFLVLLQGTQS. A propeptide spanning residues 28-97 is cleaved from the precursor; it reads VYIQYQGFRV…SIFQALRTIA (70 aa). 3 cysteine pairs are disulfide-bonded: C68-C81, C101-C109, and C104-C112.

It belongs to the guanylin family.

It localises to the secreted. Endogenous activator of intestinal guanylate cyclase. It stimulates this enzyme through the same receptor binding region as the heat-stable enterotoxins. May be a potent physiological regulator of intestinal fluid and electrolyte transport. May be an autocrine/paracrine regulator of intestinal salt and water transport. This chain is Guanylate cyclase activator 2B (GUCA2B), found in Sus scrofa (Pig).